The chain runs to 466 residues: Asparagine--tRNA ligase (466 aa).

The protein belongs to the class-II aminoacyl-tRNA synthetase family. Homodimer.

It is found in the cytoplasm. It catalyses the reaction tRNA(Asn) + L-asparagine + ATP = L-asparaginyl-tRNA(Asn) + AMP + diphosphate + H(+). This chain is Asparagine--tRNA ligase, found in Photobacterium profundum (strain SS9).